The chain runs to 248 residues: Phosphate import ATP-binding protein PstB (248 aa).

The region spanning Met-1 to Ile-243 is the ABC transporter domain. Gly-33 to Ser-40 serves as a coordination point for ATP.

The protein belongs to the ABC transporter superfamily. Phosphate importer (TC 3.A.1.7) family. The complex is composed of two ATP-binding proteins (PstB), two transmembrane proteins (PstC and PstA) and a solute-binding protein (PstS).

It is found in the cell inner membrane. It catalyses the reaction phosphate(out) + ATP + H2O = ADP + 2 phosphate(in) + H(+). In terms of biological role, part of the ABC transporter complex PstSACB involved in phosphate import. Responsible for energy coupling to the transport system. This chain is Phosphate import ATP-binding protein PstB, found in Rhodospirillum rubrum (strain ATCC 11170 / ATH 1.1.1 / DSM 467 / LMG 4362 / NCIMB 8255 / S1).